The sequence spans 512 residues: ATP synthase subunit alpha 1 (512 aa).

169 to 176 (GDRQTGKT) serves as a coordination point for ATP.

It belongs to the ATPase alpha/beta chains family. F-type ATPases have 2 components, CF(1) - the catalytic core - and CF(0) - the membrane proton channel. CF(1) has five subunits: alpha(3), beta(3), gamma(1), delta(1), epsilon(1). CF(0) has four main subunits: a(1), b(1), b'(1) and c(9-12).

It localises to the cell inner membrane. It catalyses the reaction ATP + H2O + 4 H(+)(in) = ADP + phosphate + 5 H(+)(out). Its function is as follows. Produces ATP from ADP in the presence of a proton gradient across the membrane. The alpha chain is a regulatory subunit. The chain is ATP synthase subunit alpha 1 from Cereibacter sphaeroides (strain ATCC 17029 / ATH 2.4.9) (Rhodobacter sphaeroides).